The chain runs to 455 residues: Bifunctional protein GlmU (455 aa).

The pyrophosphorylase stretch occupies residues 1–226; sequence MSLEIVILAA…AMEVQGANDR (226 aa). Residues 8–11, lysine 22, glutamine 73, 78–79, 99–101, glycine 136, glutamate 151, asparagine 166, and asparagine 224 each bind UDP-N-acetyl-alpha-D-glucosamine; these read LAAG, GT, and YGD. Aspartate 101 serves as a coordination point for Mg(2+). Residue asparagine 224 participates in Mg(2+) binding. Positions 227 to 247 are linker; the sequence is KQLAELERHYQLRAGRRLMAQ. Positions 248 to 455 are N-acetyltransferase; it reads GVTLRDPARF…WKRPEKIKKD (208 aa). Residues arginine 330 and lysine 348 each contribute to the UDP-N-acetyl-alpha-D-glucosamine site. Histidine 360 acts as the Proton acceptor in catalysis. Residues tyrosine 363 and asparagine 374 each contribute to the UDP-N-acetyl-alpha-D-glucosamine site. Acetyl-CoA contacts are provided by residues alanine 377, 383-384, serine 402, alanine 420, and arginine 437; that span reads NY.

The protein in the N-terminal section; belongs to the N-acetylglucosamine-1-phosphate uridyltransferase family. In the C-terminal section; belongs to the transferase hexapeptide repeat family. As to quaternary structure, homotrimer. It depends on Mg(2+) as a cofactor.

It is found in the cytoplasm. It carries out the reaction alpha-D-glucosamine 1-phosphate + acetyl-CoA = N-acetyl-alpha-D-glucosamine 1-phosphate + CoA + H(+). The enzyme catalyses N-acetyl-alpha-D-glucosamine 1-phosphate + UTP + H(+) = UDP-N-acetyl-alpha-D-glucosamine + diphosphate. It functions in the pathway nucleotide-sugar biosynthesis; UDP-N-acetyl-alpha-D-glucosamine biosynthesis; N-acetyl-alpha-D-glucosamine 1-phosphate from alpha-D-glucosamine 6-phosphate (route II): step 2/2. The protein operates within nucleotide-sugar biosynthesis; UDP-N-acetyl-alpha-D-glucosamine biosynthesis; UDP-N-acetyl-alpha-D-glucosamine from N-acetyl-alpha-D-glucosamine 1-phosphate: step 1/1. Its pathway is bacterial outer membrane biogenesis; LPS lipid A biosynthesis. Its function is as follows. Catalyzes the last two sequential reactions in the de novo biosynthetic pathway for UDP-N-acetylglucosamine (UDP-GlcNAc). The C-terminal domain catalyzes the transfer of acetyl group from acetyl coenzyme A to glucosamine-1-phosphate (GlcN-1-P) to produce N-acetylglucosamine-1-phosphate (GlcNAc-1-P), which is converted into UDP-GlcNAc by the transfer of uridine 5-monophosphate (from uridine 5-triphosphate), a reaction catalyzed by the N-terminal domain. The chain is Bifunctional protein GlmU from Pseudomonas fluorescens (strain ATCC BAA-477 / NRRL B-23932 / Pf-5).